The following is a 1232-amino-acid chain: DNA-directed RNA polymerase subunit beta (1232 aa).

Residues 1170–1232 (SVDEDADELE…LDLDDFGDEH (63 aa)) form a disordered region. Positions 1171-1180 (VDEDADELEV) are enriched in acidic residues. The span at 1189–1198 (PEEKEEKEKE) shows a compositional bias: basic and acidic residues. Over residues 1199–1232 (DSDEYDDLREEDVEPDLEELSLDDLDLDDFGDEH) the composition is skewed to acidic residues.

Belongs to the RNA polymerase beta chain family. As to quaternary structure, the RNAP catalytic core consists of 2 alpha, 1 beta, 1 beta' and 1 omega subunit. When a sigma factor is associated with the core the holoenzyme is formed, which can initiate transcription.

It catalyses the reaction RNA(n) + a ribonucleoside 5'-triphosphate = RNA(n+1) + diphosphate. Its function is as follows. DNA-dependent RNA polymerase catalyzes the transcription of DNA into RNA using the four ribonucleoside triphosphates as substrates. The protein is DNA-directed RNA polymerase subunit beta of Clostridium botulinum (strain Hall / ATCC 3502 / NCTC 13319 / Type A).